Here is a 1472-residue protein sequence, read N- to C-terminus: ABC transporter FGM5 (1472 aa).

11 helical membrane passes run Ile-32–Thr-52, Phe-67–Ser-87, Phe-100–Phe-120, Tyr-163–Gln-183, Ser-197–Phe-217, Ala-271–Tyr-291, Gly-316–Trp-336, Phe-386–Leu-406, Leu-412–Ala-432, Leu-493–Phe-513, and Leu-534–Val-554. The ABC transmembrane type-1 1 domain maps to Ile-284 to Ala-551. The region spanning Ile-605–Ser-834 is the ABC transporter 1 domain. Position 638–645 (Gly-638–Ser-645) interacts with ATP. N-linked (GlcNAc...) asparagine glycans are attached at residues Asn-682, Asn-696, Asn-763, Asn-784, and Asn-843. Helical transmembrane passes span Leu-900–Trp-920, Leu-938–Met-958, Gly-1003–Ala-1023, and Val-1024–Ile-1044. In terms of domain architecture, ABC transmembrane type-1 2 spans Leu-900–Leu-1139. The N-linked (GlcNAc...) asparagine glycan is linked to Asn-1101. A helical membrane pass occupies residues Phe-1116–Ser-1136. In terms of domain architecture, ABC transporter 2 spans Tyr-1218 to Ala-1468. ATP is bound at residue Gly-1255–Ser-1262. N-linked (GlcNAc...) asparagine glycosylation is found at Asn-1277 and Asn-1293.

The protein belongs to the ABC transporter superfamily. ABCC family. Conjugate transporter (TC 3.A.1.208) subfamily.

It localises to the cell membrane. It functions in the pathway secondary metabolite biosynthesis. ABC transporter; part of the Fg3_54/C64 gene cluster that mediates the biosynthesis of the octapeptide fusaoctaxin A, a virulence factor that is required for cell-to-cell invasiveness of plant host. The 2 nonribosomal peptide synthetases NRPS9 and NRPS5 form an assembly line which likely utilizes GABA as a starter unit (loaded on the unique module M1 of NRPS9) and sequentially incorporates seven extender units composed of the residues L-Ala, L-allo-Ile, L-Ser, L-Val, L-Ser, L-Leu and L-Leu, respectively. During the process, each of the residues that are tethered on modules M3-M7 of NRPS5 containing an E domain can undergo an epimerization reaction to produce a D-configuration before the transpeptidation reaction occurs. The elongation of the peptidyl chain might be terminated by module M8-mediated L-Leu incorporation, followed by R domain-catalyzed 4 electron reduction to release the resulting octapeptide from the assembly line as an alcohol. Fusaoctaxin A is cleaved by the cluster specific ABC transporter FGM5 to the pentapeptide fusapentaxin A and the tripeptide fusatrixin A. The other enzymes from the cluster, FGM1, FGM2, FGM3 and FGM9 seem not to be involved in the biosynthesis of fusaoctaxin A and their functions have still to be determined. The protein is ABC transporter FGM5 of Gibberella zeae (strain ATCC MYA-4620 / CBS 123657 / FGSC 9075 / NRRL 31084 / PH-1) (Wheat head blight fungus).